We begin with the raw amino-acid sequence, 397 residues long: Succinate--CoA ligase [ADP-forming] subunit beta (397 aa).

The region spanning 9 to 254 is the ATP-grasp domain; it reads KALLRQYGAP…ETEEDPKELA (246 aa). ATP is bound by residues lysine 46, 53–55, glutamate 109, serine 112, and glutamate 117; that span reads GRG. Mg(2+) contacts are provided by asparagine 209 and aspartate 223. Substrate contacts are provided by residues asparagine 274 and 331–333; that span reads GIM.

Belongs to the succinate/malate CoA ligase beta subunit family. As to quaternary structure, heterotetramer of two alpha and two beta subunits. Requires Mg(2+) as cofactor.

The catalysed reaction is succinate + ATP + CoA = succinyl-CoA + ADP + phosphate. It carries out the reaction GTP + succinate + CoA = succinyl-CoA + GDP + phosphate. It functions in the pathway carbohydrate metabolism; tricarboxylic acid cycle; succinate from succinyl-CoA (ligase route): step 1/1. Its function is as follows. Succinyl-CoA synthetase functions in the citric acid cycle (TCA), coupling the hydrolysis of succinyl-CoA to the synthesis of either ATP or GTP and thus represents the only step of substrate-level phosphorylation in the TCA. The beta subunit provides nucleotide specificity of the enzyme and binds the substrate succinate, while the binding sites for coenzyme A and phosphate are found in the alpha subunit. The sequence is that of Succinate--CoA ligase [ADP-forming] subunit beta from Paracoccus denitrificans (strain Pd 1222).